The chain runs to 125 residues: Ribonuclease P protein component (125 aa).

This sequence belongs to the RnpA family. As to quaternary structure, consists of a catalytic RNA component (M1 or rnpB) and a protein subunit.

It catalyses the reaction Endonucleolytic cleavage of RNA, removing 5'-extranucleotides from tRNA precursor.. Functionally, RNaseP catalyzes the removal of the 5'-leader sequence from pre-tRNA to produce the mature 5'-terminus. It can also cleave other RNA substrates such as 4.5S RNA. The protein component plays an auxiliary but essential role in vivo by binding to the 5'-leader sequence and broadening the substrate specificity of the ribozyme. In Idiomarina loihiensis (strain ATCC BAA-735 / DSM 15497 / L2-TR), this protein is Ribonuclease P protein component.